The sequence spans 447 residues: Putative bacteriocin-SkfA transport system permease protein SkfF (447 aa).

Topologically, residues 1-3 (MPF) are cytoplasmic. Residues 4-22 (LIMLLFVGAIGFQVSFVSR) form a helical membrane-spanning segment. At 23-29 (STTWDMS) the chain is on the extracellular side. The helical transmembrane segment at 30–50 (IAGWVLTGVFILYTAFGLFSN) threads the bilayer. Topologically, residues 51–59 (RLPSQMADI) are cytoplasmic. A helical transmembrane segment spans residues 60-80 (IWLYGTATSFSKVVYSVLFFS). Residues 81 to 85 (VTWKA) are Extracellular-facing. Residues 86–104 (LLWIISAIFGDVLIVLLSG) form a helical membrane-spanning segment. Topologically, residues 105-113 (DHINLLGRS) are cytoplasmic. The chain crosses the membrane as a helical span at residues 114–134 (IIFVGLFFIAEVWLMSVSCAR). The Extracellular segment spans residues 135 to 141 (TVKKMKR). Residues 142–160 (VYVLVFLLMLGIYSICLYR) traverse the membrane as a helical segment. Residues 161 to 189 (FFFLQHSSGIWESIARFISGVGLVFDTLS) are Cytoplasmic-facing. A helical membrane pass occupies residues 190 to 208 (PLYVVVFIGIITVSFMTIA). The Extracellular segment spans residues 209–247 (FTSRQVEMKESLVKEAEFWEEFQERQFGSGQIIQKPKTT). A helical transmembrane segment spans residues 248–268 (WWGLQGLNGIWSFLWLELLLF). Over 269-297 (KKYLFFHSIHTVMLSGVFYVVIFMYPEWF) the chain is Cytoplasmic. The chain crosses the membrane as a helical span at residues 298–318 (YLLFFLIVSAVMLSSYYSGIV). Residues 319–341 (RHSQSGTLHLFPGALWKKIIILE) lie on the Extracellular side of the membrane. Residues 342–360 (LTNTVWLYILYCVSITFMA) form a helical membrane-spanning segment. Residues 361 to 363 (VGN) lie on the Cytoplasmic side of the membrane. A helical membrane pass occupies residues 364 to 382 (LVYWYIYGLGIYIWFMTIR). Residues 383 to 404 (LFAFTHTNRNDIKLSLPQYYKS) are Extracellular-facing. The helical transmembrane segment at 405–423 (FFMALGLSGICLYVIHLLT) threads the bilayer. Topologically, residues 424–426 (ADW) are cytoplasmic. The chain crosses the membrane as a helical span at residues 427-447 (YTLVVVVCIGSLSWCLFYRFR).

It is found in the cell membrane. In terms of biological role, probably part of the ABC transporter SkfEF involved in the export of the bacteriocin SKF. Probably responsible for the translocation of bacteriocin SkfA across the membrane. This is Putative bacteriocin-SkfA transport system permease protein SkfF from Bacillus subtilis (strain 168).